A 508-amino-acid polypeptide reads, in one-letter code: MSRIVFICLAAILTDALTWAQVNVEPNTALLNEGDRTELLCRYGRSINYCRIEIPGEQKVLNLSPEWSKTPGFTYFGAGLTAGQCGVSIERVKASNNGQVKCSLGVEGEELSGTIDLVVALRPQQPIIELLSRPNREGYFNEGTEFRARCSVRDGRPPANISWYIDNMPANKRTTPLEVMSSTNDNVELSTSVQEIQWHLSPEDSNRKLVCRSHHQTDRESVPPQEAAYIINVRYAPVHQPDAAVYGLYLEHTAIVNITIRASPQPKIEWTIDGAIVGQGRTDGRYSAYEPQYLGNDEYNVTLAIAGLTLEDTTKIYNLRASNELGLTDYQVRISSSSKPPSSSLDVAAIVGIVVAVAVLVLVVLLIVFARATGRWCFGGKSIKTPTNETSDTESADIKATSTATATTTMGGVGVSAEEEETVNEQESPQEQQQQQQKKAKRLPAFAAAILRRFNEKDSRKYKDNQESLNIVEGSVQEIPATNNAIDGNDNEPKAIVWQSTSPVWTFK.

The first 20 residues, 1–20 (MSRIVFICLAAILTDALTWA), serve as a signal peptide directing secretion. Gln-21 is modified (pyrrolidone carboxylic acid). At 21–346 (QVNVEPNTAL…SSKPPSSSLD (326 aa)) the chain is on the extracellular side. The region spanning 44–106 (GRSINYCRIE…NGQVKCSLGV (63 aa)) is the Ig-like V-type domain. Ig-like C2-type domains are found at residues 126–223 (PIIE…ESVP) and 236–310 (APVH…GLTL). Residues Cys-150 and Cys-211 are joined by a disulfide bond. N-linked (GlcNAc...) asparagine glycans are attached at residues Asn-160, Asn-257, and Asn-300. Residues 347-370 (VAAIVGIVVAVAVLVLVVLLIVFA) form a helical membrane-spanning segment. The Cytoplasmic segment spans residues 371 to 508 (RATGRWCFGG…QSTSPVWTFK (138 aa)). The tract at residues 381 to 439 (KSIKTPTNETSDTESADIKATSTATATTTMGGVGVSAEEEETVNEQESPQEQQQQQQKK) is disordered. The residue at position 382 (Ser-382) is a Phosphoserine. 2 stretches are compositionally biased toward low complexity: residues 400 to 409 (ATSTATATTT) and 425 to 437 (EQESPQEQQQQQQ). Ser-459 bears the Phosphoserine mark.

Expressed on different subsets of axon bundles (fascicles) in insect embryos.

Its subcellular location is the membrane. Functionally, mediates cell adhesion in a Ca(2+)-independent manner. It plays a role in axon outgrowth, guidance and fasciculation of the developing nervous system. Function in neurons is essential for adult survival, and is important for climbing behavior and activity. The polypeptide is Fasciclin-3 (Fas3) (Drosophila melanogaster (Fruit fly)).